The chain runs to 255 residues: Pimeloyl-[acyl-carrier protein] methyl ester esterase (255 aa).

Positions 16-241 constitute an AB hydrolase-1 domain; it reads LVLLHGWGMN…QSSHAPFMTE (226 aa). Substrate contacts are provided by residues Trp22, 82-83, and 143-147; these read SL and FMALQ. The active-site Nucleophile is the Ser82. Catalysis depends on residues Asp207 and His235. Residue His235 participates in substrate binding.

It belongs to the AB hydrolase superfamily. Carboxylesterase BioH family. In terms of assembly, monomer.

It localises to the cytoplasm. The enzyme catalyses 6-carboxyhexanoyl-[ACP] methyl ester + H2O = 6-carboxyhexanoyl-[ACP] + methanol + H(+). Its pathway is cofactor biosynthesis; biotin biosynthesis. Functionally, the physiological role of BioH is to remove the methyl group introduced by BioC when the pimeloyl moiety is complete. It allows to synthesize pimeloyl-ACP via the fatty acid synthetic pathway through the hydrolysis of the ester bonds of pimeloyl-ACP esters. The sequence is that of Pimeloyl-[acyl-carrier protein] methyl ester esterase from Vibrio parahaemolyticus serotype O3:K6 (strain RIMD 2210633).